Consider the following 445-residue polypeptide: tRNA-2-methylthio-N(6)-dimethylallyladenosine synthase (445 aa).

An MTTase N-terminal domain is found at 3–120; sequence RKLFIQTHGC…LPGLITQAAS (118 aa). [4Fe-4S] cluster is bound by residues cysteine 12, cysteine 49, cysteine 83, cysteine 157, cysteine 161, and cysteine 164. A Radical SAM core domain is found at 143-375; the sequence is SVDGPSAFVS…QQRINQNVQD (233 aa). The TRAM domain maps to 378–442; the sequence is RKMVGSTQRI…SNSLLGTDPR (65 aa).

The protein belongs to the methylthiotransferase family. MiaB subfamily. As to quaternary structure, monomer. It depends on [4Fe-4S] cluster as a cofactor.

The protein resides in the cytoplasm. The enzyme catalyses N(6)-dimethylallyladenosine(37) in tRNA + (sulfur carrier)-SH + AH2 + 2 S-adenosyl-L-methionine = 2-methylsulfanyl-N(6)-dimethylallyladenosine(37) in tRNA + (sulfur carrier)-H + 5'-deoxyadenosine + L-methionine + A + S-adenosyl-L-homocysteine + 2 H(+). Catalyzes the methylthiolation of N6-(dimethylallyl)adenosine (i(6)A), leading to the formation of 2-methylthio-N6-(dimethylallyl)adenosine (ms(2)i(6)A) at position 37 in tRNAs that read codons beginning with uridine. The sequence is that of tRNA-2-methylthio-N(6)-dimethylallyladenosine synthase from Alcanivorax borkumensis (strain ATCC 700651 / DSM 11573 / NCIMB 13689 / SK2).